The chain runs to 506 residues: Anaerobic nitric oxide reductase transcription regulator NorR (506 aa).

A 4-aspartylphosphate modification is found at D57. The 230-residue stretch at 187–416 (MIGLSPAMTQ…LEHAIHRAVV (230 aa)) folds into the Sigma-54 factor interaction domain. ATP contacts are provided by residues 215–222 (GETGTGKE) and 278–287 (ADNGTLFLDE). Residues 481 to 500 (WAASARALETDVANLHRLAK) constitute a DNA-binding region (H-T-H motif).

It functions in the pathway nitrogen metabolism; nitric oxide reduction. Required for the expression of anaerobic nitric oxide (NO) reductase, acts as a transcriptional activator for at least the norVW operon. Activation also requires sigma-54. The polypeptide is Anaerobic nitric oxide reductase transcription regulator NorR (Salmonella heidelberg (strain SL476)).